The following is a 322-amino-acid chain: HPr kinase/phosphorylase (322 aa).

Residues histidine 146 and lysine 167 contribute to the active site. 161-168 (GDSGLGKS) provides a ligand contact to ATP. Position 168 (serine 168) interacts with Mg(2+). Catalysis depends on aspartate 185, which acts as the Proton acceptor; for phosphorylation activity. Proton donor; for dephosphorylation activity. Residues 209–218 (LEVRGLGLLD) form an important for the catalytic mechanism of both phosphorylation and dephosphorylation region. Residue glutamate 210 coordinates Mg(2+). Residue arginine 250 is part of the active site. Residues 271–276 (QVAAGR) form an important for the catalytic mechanism of dephosphorylation region.

Belongs to the HPrK/P family. As to quaternary structure, homohexamer. Requires Mg(2+) as cofactor.

The catalysed reaction is [HPr protein]-L-serine + ATP = [HPr protein]-O-phospho-L-serine + ADP + H(+). It carries out the reaction [HPr protein]-O-phospho-L-serine + phosphate + H(+) = [HPr protein]-L-serine + diphosphate. In terms of biological role, catalyzes the ATP- as well as the pyrophosphate-dependent phosphorylation of a specific serine residue in HPr, a phosphocarrier protein of the phosphoenolpyruvate-dependent sugar phosphotransferase system (PTS). HprK/P also catalyzes the pyrophosphate-producing, inorganic phosphate-dependent dephosphorylation (phosphorolysis) of seryl-phosphorylated HPr (P-Ser-HPr). In Paraburkholderia phymatum (strain DSM 17167 / CIP 108236 / LMG 21445 / STM815) (Burkholderia phymatum), this protein is HPr kinase/phosphorylase.